Reading from the N-terminus, the 234-residue chain is Purine nucleoside phosphorylase DeoD-type (234 aa).

An a purine D-ribonucleoside-binding site is contributed by His-5. Phosphate contacts are provided by residues Gly-21, Arg-25, Arg-44, and 88–91; that span reads RIGT. Residues 180–182 and 204–205 contribute to the a purine D-ribonucleoside site; these read DME and SD. The active-site Proton donor is Asp-205.

The protein belongs to the PNP/UDP phosphorylase family. As to quaternary structure, homohexamer; trimer of homodimers.

The enzyme catalyses a purine D-ribonucleoside + phosphate = a purine nucleobase + alpha-D-ribose 1-phosphate. The catalysed reaction is a purine 2'-deoxy-D-ribonucleoside + phosphate = a purine nucleobase + 2-deoxy-alpha-D-ribose 1-phosphate. Catalyzes the reversible phosphorolytic breakdown of the N-glycosidic bond in the beta-(deoxy)ribonucleoside molecules, with the formation of the corresponding free purine bases and pentose-1-phosphate. The polypeptide is Purine nucleoside phosphorylase DeoD-type (Buchnera aphidicola subsp. Acyrthosiphon pisum (strain APS) (Acyrthosiphon pisum symbiotic bacterium)).